The following is a 630-amino-acid chain: 1-deoxy-D-xylulose-5-phosphate synthase (630 aa).

Residues histidine 75 and 116–118 each bind thiamine diphosphate; that span reads GHS. Residue aspartate 147 participates in Mg(2+) binding. Thiamine diphosphate-binding positions include 148-149, asparagine 176, tyrosine 287, and glutamate 367; that span reads GA. Residue asparagine 176 participates in Mg(2+) binding.

The protein belongs to the transketolase family. DXPS subfamily. As to quaternary structure, homodimer. Requires Mg(2+) as cofactor. The cofactor is thiamine diphosphate.

It catalyses the reaction D-glyceraldehyde 3-phosphate + pyruvate + H(+) = 1-deoxy-D-xylulose 5-phosphate + CO2. The protein operates within metabolic intermediate biosynthesis; 1-deoxy-D-xylulose 5-phosphate biosynthesis; 1-deoxy-D-xylulose 5-phosphate from D-glyceraldehyde 3-phosphate and pyruvate: step 1/1. Catalyzes the acyloin condensation reaction between C atoms 2 and 3 of pyruvate and glyceraldehyde 3-phosphate to yield 1-deoxy-D-xylulose-5-phosphate (DXP). This Treponema pallidum (strain Nichols) protein is 1-deoxy-D-xylulose-5-phosphate synthase.